The sequence spans 563 residues: Developmental regulatory protein wetA (563 aa).

Composition is skewed to polar residues over residues 54–69 (EQSP…THPS) and 160–175 (HKQS…SQFQ). Disordered regions lie at residues 54-81 (EQSP…SLPP), 112-176 (ASST…QFQK), 272-318 (SNNS…PDLQ), 334-356 (PQRQ…IQNT), 430-494 (PQLH…SPKG), and 516-538 (GVAP…DRRR). Over residues 272 to 305 (SNNSTVTSSPPSADDIFPSPHSSDPQSMSSWHSD) the composition is skewed to low complexity. The segment covering 430-441 (PQLHPQSRSPSL) has biased composition (polar residues).

Belongs to the wetA family.

Its function is as follows. BrlA, abaA and wetA are pivotal regulators of conidiophore development and conidium maturation. They act individually and together to regulate their own expression and that of numerous other sporulation-specific genes. This Aspergillus oryzae (strain ATCC 42149 / RIB 40) (Yellow koji mold) protein is Developmental regulatory protein wetA.